Reading from the N-terminus, the 470-residue chain is Fumarate hydratase class II (470 aa).

Substrate is bound by residues 99–101, 129–132, 139–141, and Thr187; these read SGT, HPND, and SSN. His188 serves as the catalytic Proton donor/acceptor. Residue Ser318 is part of the active site. Residues Ser319 and 324-326 contribute to the substrate site; that span reads KIN.

Belongs to the class-II fumarase/aspartase family. Fumarase subfamily. As to quaternary structure, homotetramer.

The protein localises to the cytoplasm. It carries out the reaction (S)-malate = fumarate + H2O. The protein operates within carbohydrate metabolism; tricarboxylic acid cycle; (S)-malate from fumarate: step 1/1. Involved in the TCA cycle. Catalyzes the stereospecific interconversion of fumarate to L-malate. This is Fumarate hydratase class II from Halobacterium salinarum (strain ATCC 700922 / JCM 11081 / NRC-1) (Halobacterium halobium).